A 150-amino-acid polypeptide reads, in one-letter code: Large-conductance mechanosensitive channel (150 aa).

A run of 2 helical transmembrane segments spans residues 14 to 34 (VIDLAVGVIIGGAFGKIVTSL) and 81 to 101 (GLFINNVVDFLIIAFTIFIVI).

The protein belongs to the MscL family. In terms of assembly, homopentamer.

The protein localises to the cell membrane. Channel that opens in response to stretch forces in the membrane lipid bilayer. May participate in the regulation of osmotic pressure changes within the cell. The polypeptide is Large-conductance mechanosensitive channel (Desulfitobacterium hafniense (strain DSM 10664 / DCB-2)).